The chain runs to 321 residues: tRNA U34 carboxymethyltransferase (321 aa).

Carboxy-S-adenosyl-L-methionine-binding positions include K90, W104, K109, G129, 151–153 (DPT), 180–181 (IE), M195, Y199, and R314.

This sequence belongs to the class I-like SAM-binding methyltransferase superfamily. CmoB family. In terms of assembly, homotetramer.

The enzyme catalyses carboxy-S-adenosyl-L-methionine + 5-hydroxyuridine(34) in tRNA = 5-carboxymethoxyuridine(34) in tRNA + S-adenosyl-L-homocysteine + H(+). In terms of biological role, catalyzes carboxymethyl transfer from carboxy-S-adenosyl-L-methionine (Cx-SAM) to 5-hydroxyuridine (ho5U) to form 5-carboxymethoxyuridine (cmo5U) at position 34 in tRNAs. The protein is tRNA U34 carboxymethyltransferase of Mannheimia succiniciproducens (strain KCTC 0769BP / MBEL55E).